Reading from the N-terminus, the 409-residue chain is Indian hedgehog protein (409 aa).

The N-terminal stretch at 1–23 (MQLPKVVLLLCAAALLLSGAVRG) is a signal peptide. A lipid anchor (N-palmitoyl cysteine) is attached at Cys24. Glu89, Glu90, Asp95, Thr125, Glu126, Asp129, and Asp131 together coordinate Ca(2+). Residues His140, Asp147, and His182 each contribute to the Zn(2+) site. A lipid anchor (Cholesterol glycine ester) is attached at Gly197.

The protein belongs to the hedgehog family. Multimer. As to quaternary structure, interacts with BOC and CDON. Interacts with PTCH1. Interacts with glypican GPC3. Cholesterylation is required for N-product targeting to lipid rafts and multimerization. In terms of processing, the C-terminal domain displays an autoproteolysis activity and a cholesterol transferase activity. Both activities result in the cleavage of the full-length protein and covalent attachment of a cholesterol moiety to the C-terminal of the newly generated N-product. The N-product is the active species in both local and long-range signaling, whereas the C-product is degraded in the endoplasmic reticulum. Post-translationally, N-palmitoylation by HHAT of N-product is required for indian hedgehog protein N-product multimerization and full activity. Expressed in the marginal zone at early gastrulation. At stage 14, expression begins in the neural plate with expression becoming more prominent in the anterodorsal area at neural tube closure. At this stage, also expressed diffusely in the somitic and pre-somitic mesoderm. By the early tadpole (stages 28-30), expression is widespread throughout anterior structures with highest levels in the otic vesicle, the eye, and the branchial arches.

Its subcellular location is the cell membrane. The protein localises to the endoplasmic reticulum membrane. It is found in the golgi apparatus membrane. It localises to the secreted. It catalyses the reaction glycyl-L-cysteinyl-[protein] + cholesterol + H(+) = [protein]-C-terminal glycyl cholesterol ester + N-terminal L-cysteinyl-[protein]. Functionally, signal involved in the early induction and patterning of anterodorsal ectoderm, nervous system and somites. Induces ectopic cement gland formation in embryos. It is involved in the regulation of endochondral skeleton formation, and the development of retinal pigment epithelium (RPE), photoreceptors and periocular tissues. Its function is as follows. The C-terminal part of the indian hedgehog protein precursor displays an autoproteolysis and a cholesterol transferase activity. Both activities result in the cleavage of the full-length protein into two parts followed by the covalent attachment of a cholesterol moiety to the C-terminal of the newly generated N-product. Both activities occur in the endoplasmic reticulum. The dually lipidated indian hedgehog protein N-product is a morphogen which is essential for a variety of patterning events during development. Binds to the patched (PTCH1) receptor, which functions in association with smoothened (SMO), to activate the transcription of target genes. Signal involved in the early induction and patterning of anterodorsal ectoderm, nervous system and somites. Induces ectopic cement gland formation in embryos. The chain is Indian hedgehog protein from Xenopus laevis (African clawed frog).